The following is a 495-amino-acid chain: Prenylcysteine oxidase 1-like (495 aa).

The first 22 residues, 1-22 (MARAAPLLAVLATVLTTAAAGG), serve as a signal peptide directing secretion. Residues asparagine 185 and asparagine 343 are each glycosylated (N-linked (GlcNAc...) asparagine).

This sequence belongs to the prenylcysteine oxidase family. FAD serves as cofactor.

The protein resides in the secreted. Functionally, likely to have oxidoreductase activity. Required in the mevalonate pathway to regulate prenylation and enhances the bactericidal activity of neutrophils. The chain is Prenylcysteine oxidase 1-like (Pcyox1l) from Mus musculus (Mouse).